A 282-amino-acid polypeptide reads, in one-letter code: Ermin (282 aa).

Polar residues-rich tracts occupy residues 1–12 (MTDTPVTLSGSE) and 21–30 (NGQQPSSQTR). Residues 1 to 71 (MTDTPVTLSG…NSKGNVLPRG (71 aa)) are disordered. Residues serine 72, serine 212, serine 224, serine 228, and serine 231 each carry the phosphoserine modification. The span at 212 to 224 (SPLKEESLAREDS) shows a compositional bias: basic and acidic residues. Positions 212–246 (SPLKEESLAREDSPLSSPSSQPGTPDEQLVLGKKG) are disordered. The segment covering 225–234 (PLSSPSSQPG) has biased composition (polar residues). Threonine 235 is modified (phosphothreonine). The binds actin stretch occupies residues 263–282 (KIRKGNTKQRIDEFESMMHL).

Binds actin. Expressed specifically by the oligodendrocytes. Highest expression seen in the spinal cord followed by brainstem, cerebellum, thalamus, and hypothalamus. In the myelin sheath, found mainly in the abaxon and the lateral few terminal loops. Its apposition to the myelinated axon, through the latter, defines an axonal subregion, termed juxtanode, at the Ranvier node-paranode junction.

The protein resides in the cytoplasm. The protein localises to the cytoskeleton. Plays a role in cytoskeletal rearrangements during the late wrapping and/or compaction phases of myelinogenesis as well as in maintenance and stability of myelin sheath in the adult. May play an important role in late-stage oligodendroglia maturation, myelin/Ranvier node formation during CNS development, and in the maintenance and plasticity of related structures in the mature CNS. This Rattus norvegicus (Rat) protein is Ermin (Ermn).